A 588-amino-acid chain; its full sequence is Methylcrotonoyl-CoA carboxylase beta chain, mitochondrial (588 aa).

The CoA carboxyltransferase N-terminal domain occupies 72-329 (MNSTLKQLKE…KKQPSPVITE (258 aa)). The tract at residues 72–570 (MNSTLKQLKE…RKVIALSLSA (499 aa)) is carboxyltransferase. The 242-residue stretch at 329 to 570 (ETEEPLYPTS…RKVIALSLSA (242 aa)) folds into the CoA carboxyltransferase C-terminal domain. Positions 366-395 (RFDEFKELYGTTLICGFARVHGMPVGIIAN) are acyl-CoA binding.

It belongs to the AccD/PCCB family. In terms of assembly, probably a dodecamer composed of six biotin-containing alpha subunits and six beta subunits.

It is found in the mitochondrion matrix. It catalyses the reaction 3-methylbut-2-enoyl-CoA + hydrogencarbonate + ATP = 3-methyl-(2E)-glutaconyl-CoA + ADP + phosphate + H(+). The protein operates within amino-acid degradation; L-leucine degradation; (S)-3-hydroxy-3-methylglutaryl-CoA from 3-isovaleryl-CoA: step 2/3. In terms of biological role, carboxyltransferase subunit of the 3-methylcrotonyl-CoA carboxylase, an enzyme that catalyzes the conversion of 3-methylcrotonyl-CoA to 3-methylglutaconyl-CoA, a critical step for leucine and isovaleric acid catabolism. This is Methylcrotonoyl-CoA carboxylase beta chain, mitochondrial (mccb) from Dictyostelium discoideum (Social amoeba).